Consider the following 431-residue polypeptide: Keratin, type I cytoskeletal 40 (431 aa).

The interval 1–89 (MASDCSPTGC…CEDGVFNSNE (89 aa)) is head. Positions 89-400 (EKETMQFLND…GLLDSEDSRL (312 aa)) constitute an IF rod domain. Residues 90 to 124 (KETMQFLNDRLASYLEKVRGLEELNAELECRIREQ) form a coil 1A region. Positions 125 to 135 (CEEDVPLVCPD) are linker 1. A coil 1B region spans residues 136-236 (YQCYFDTIED…HEEEVNVLRG (101 aa)). The tract at residues 237–252 (QLGDRLSVELDTAPTT) is linker 12. Positions 253 to 396 (DLNRVLDEMR…NTYQGLLDSE (144 aa)) are coil 2. The segment at 397 to 431 (DSRLPCNPCSATSMSNDTCEPCSAYVICTVENSCP) is tail.

The protein belongs to the intermediate filament family. As to quaternary structure, heterotetramer of two type I and two type II keratins.

Its function is as follows. May play a role in late hair differentiation. This chain is Keratin, type I cytoskeletal 40 (KRT40), found in Bos taurus (Bovine).